The primary structure comprises 429 residues: Probable alcohol acetyltransferase orf1 (429 aa).

Belongs to the alcohol acetyltransferase FCK4 family.

The protein operates within secondary metabolite biosynthesis. In terms of biological role, probable alcohol acetyltransferase; part of the gene cluster that mediates the biosynthesis of the glycolipid biosurfactant ustilagic acid (UA). UA is a secreted cellobiose glycolipid that is toxic for many microorganisms and confers biocontrol activity to U.maydis. UA consists of 15,16-dihydroxypalmitic or 2,15,16-trihydroxypalmitic acid, which is O-glycosidically linked to cellobiose at its terminal hydroxyl group. In addition, the cellobiose moiety is acetylated and acylated with a short-chain hydroxy fatty acid. UA biosynthesis starts with omega-hydroxylation of palmitic acid catalyzed by the cytochrome P450 monooxygenase cyp1. Terminal hydroxylation of palmitic acid precedes subterminal hydroxylation catalyzed by the cytochrome P450 monooxygenase cyp2. Sequential glucosylation of the hydroxy fatty acid is probably catalyzed by the glycosyltransferase ugt1. The cellobiose lipid is further decorated by acetylation of the proximal glucose residue and by acylation with a short-chain beta-hydroxy fatty acid at the distal glucose residue. The acyltransferase uat1 may be a good candidate for catalyzing either acetylation or acylation of the cellobiose lipid. The fatty acid synthase fas2 may be involved in synthesis of the carbon backbone of the short-chain beta-hydroxy fatty acid esterified to the cellobiose disaccharide. The secreted UA consists of a mixture of both alpha-hydroxylated and non-hydroxylated glycolipids; therefore, alpha-hydroxylation of the long-chain fatty, catalyzed by the fatty acid hydroxylase ahd1, occurs late in UA biosynthesis and may be the last step before secretion. The polypeptide is Probable alcohol acetyltransferase orf1 (Mycosarcoma maydis (Corn smut fungus)).